A 195-amino-acid chain; its full sequence is MARCKS-related protein (195 aa).

A disordered region spans residues 1-195; the sequence is MGSQSSKAPR…PTPASAEQNE (195 aa). Gly2 carries the N-myristoyl glycine lipid modification. Thr14 is subject to Phosphothreonine. Positions 16–26 are enriched in low complexity; it reads EEAAGASPAKA. 4 positions are modified to phosphoserine: Ser22, Ser36, Ser41, and Ser48. Residues 53–64 show a composition bias toward low complexity; that stretch reads GTDEAAGATGDA. Ser71 carries the post-translational modification Phosphoserine. Over residues 76-85 the composition is skewed to basic and acidic residues; sequence AKGEVPPKET. The residue at position 85 (Thr85) is a Phosphothreonine. Basic residues predominate over residues 86 to 98; sequence PKKKKKFSFKKPF. The effector domain involved in lipid-binding and calmodulin-binding stretch occupies residues 87–110; it reads KKKKKFSFKKPFKLSGLSFKRNRK. Residues Ser93, Ser101, Ser104, Ser119, Ser120, and Ser135 each carry the phosphoserine modification. Residue Thr148 is modified to Phosphothreonine. Phosphoserine occurs at positions 151, 162, and 165. Over residues 153–195 the composition is skewed to low complexity; it reads EPQAKGAEASAASEEEAGPQATEPSTPSGPESGPTPASAEQNE. Phosphothreonine occurs at positions 178 and 187.

The protein belongs to the MARCKS family. Binds to filamentous actin (F-actin), but not to monomeric G-actin, independently of its phosphorylation status. Phosphorylated. Phosphorylation at Ser-120 and Thr-178 is non-redundantly catalyzed by MAPK8 in vivo. Phosphorylation at Thr-148 is preferentially catalyzed by MAPK8 in vivo, but this modification can also be catalyzed by other kinases in the absence of MAPK8. May be phosphorylated by protein kinase C, which disrupts the interaction with calmodulin.

Its subcellular location is the cytoplasm. The protein localises to the cytoskeleton. It is found in the cell membrane. Controls cell movement by regulating actin cytoskeleton homeostasis and filopodium and lamellipodium formation. When unphosphorylated, induces cell migration. When phosphorylated by MAPK8, induces actin bundles formation and stabilization, thereby reducing actin plasticity, hence restricting cell movement, including neuronal migration. May be involved in coupling the protein kinase C and calmodulin signal transduction systems. The protein is MARCKS-related protein (MARCKSL1) of Homo sapiens (Human).